Consider the following 205-residue polypeptide: S-crystallin SL11 (205 aa).

The region spanning 2 to 80 (PSYTLYYFNG…YLAREFGFYG (79 aa)) is the GST N-terminal domain. The 124-residue stretch at 82–205 (NNMDMFKVDC…YIKKRNNTAF (124 aa)) folds into the GST C-terminal domain.

The protein belongs to the GST superfamily. In terms of tissue distribution, lens.

Its function is as follows. S-crystallins are structural components of squids and octopi eye lens. Contains relatively little if any GST activity. In Nototodarus sloanii (Wellington flying squid), this protein is S-crystallin SL11.